A 329-amino-acid chain; its full sequence is Beta-ketoacyl-[acyl-carrier-protein] synthase III (329 aa).

Catalysis depends on residues Cys-123 and His-256. Residues 257–261 (QANIR) form an ACP-binding region. The active site involves Asn-286.

The protein belongs to the thiolase-like superfamily. FabH family. As to quaternary structure, homodimer.

Its subcellular location is the cytoplasm. It carries out the reaction malonyl-[ACP] + acetyl-CoA + H(+) = 3-oxobutanoyl-[ACP] + CO2 + CoA. The protein operates within lipid metabolism; fatty acid biosynthesis. Catalyzes the condensation reaction of fatty acid synthesis by the addition to an acyl acceptor of two carbons from malonyl-ACP. Catalyzes the first condensation reaction which initiates fatty acid synthesis and may therefore play a role in governing the total rate of fatty acid production. Possesses both acetoacetyl-ACP synthase and acetyl transacylase activities. Its substrate specificity determines the biosynthesis of branched-chain and/or straight-chain of fatty acids. The protein is Beta-ketoacyl-[acyl-carrier-protein] synthase III of Burkholderia lata (strain ATCC 17760 / DSM 23089 / LMG 22485 / NCIMB 9086 / R18194 / 383).